The following is a 558-amino-acid chain: Dihydroxy-acid dehydratase (558 aa).

Position 78 (Asp-78) interacts with Mg(2+). A [2Fe-2S] cluster-binding site is contributed by Cys-119. Residues Asp-120 and Lys-121 each coordinate Mg(2+). The residue at position 121 (Lys-121) is an N6-carboxylysine. Cys-192 is a [2Fe-2S] cluster binding site. Residue Glu-446 coordinates Mg(2+). Ser-472 (proton acceptor) is an active-site residue.

The protein belongs to the IlvD/Edd family. Homodimer. [2Fe-2S] cluster serves as cofactor. Mg(2+) is required as a cofactor.

It catalyses the reaction (2R)-2,3-dihydroxy-3-methylbutanoate = 3-methyl-2-oxobutanoate + H2O. It carries out the reaction (2R,3R)-2,3-dihydroxy-3-methylpentanoate = (S)-3-methyl-2-oxopentanoate + H2O. It functions in the pathway amino-acid biosynthesis; L-isoleucine biosynthesis; L-isoleucine from 2-oxobutanoate: step 3/4. It participates in amino-acid biosynthesis; L-valine biosynthesis; L-valine from pyruvate: step 3/4. Functions in the biosynthesis of branched-chain amino acids. Catalyzes the dehydration of (2R,3R)-2,3-dihydroxy-3-methylpentanoate (2,3-dihydroxy-3-methylvalerate) into 2-oxo-3-methylpentanoate (2-oxo-3-methylvalerate) and of (2R)-2,3-dihydroxy-3-methylbutanoate (2,3-dihydroxyisovalerate) into 2-oxo-3-methylbutanoate (2-oxoisovalerate), the penultimate precursor to L-isoleucine and L-valine, respectively. The sequence is that of Dihydroxy-acid dehydratase from Campylobacter jejuni subsp. jejuni serotype O:23/36 (strain 81-176).